The chain runs to 429 residues: Histidine--tRNA ligase (429 aa).

This sequence belongs to the class-II aminoacyl-tRNA synthetase family. Homodimer.

The protein resides in the cytoplasm. It carries out the reaction tRNA(His) + L-histidine + ATP = L-histidyl-tRNA(His) + AMP + diphosphate + H(+). This chain is Histidine--tRNA ligase, found in Streptococcus pneumoniae (strain JJA).